The primary structure comprises 248 residues: tRNA pseudouridine synthase A (248 aa).

D53 functions as the Nucleophile in the catalytic mechanism. Residue Y111 participates in substrate binding.

The protein belongs to the tRNA pseudouridine synthase TruA family. As to quaternary structure, homodimer.

It carries out the reaction uridine(38/39/40) in tRNA = pseudouridine(38/39/40) in tRNA. In terms of biological role, formation of pseudouridine at positions 38, 39 and 40 in the anticodon stem and loop of transfer RNAs. The sequence is that of tRNA pseudouridine synthase A from Listeria monocytogenes serotype 4a (strain HCC23).